The primary structure comprises 410 residues: Voltage-dependent chloride channel 2, chloroplastic (410 aa).

The Lumenal, thylakoid portion of the chain corresponds to 1 to 110; that stretch reads MYQSMNLSFS…RHVSSSPSSR (110 aa). A helical membrane pass occupies residues 111-131; the sequence is VILSLIPPVFFFTTVAILIAG. Over 132–147 the chain is Stromal; the sequence is YNSAVDLDWLPDFFPV. Residues 148-168 form a helical membrane-spanning segment; sequence LRASPLPYQLTAPALALLLVF. The Lumenal, thylakoid segment spans residues 169–315; sequence RTEASYSRFE…PLSYTRLTSR (147 aa). Helical transmembrane passes span 316–336 and 337–357; these read FLVL…HWNV and VPAT…GVLI. At 358-410 the chain is on the lumenal, thylakoid side; that stretch reads EEPFSMLALDELCAMVLSNSDEAVESKEVIRNRIIAKKRILEIKHSSNGWHKS.

The protein belongs to the anion channel-forming bestrophin (TC 1.A.46) family. Voltage-dependent chloride channel subfamily. In terms of tissue distribution, mostly expressed in flowers and, to a lower extent, in leaves, stems and roots.

It localises to the plastid. It is found in the chloroplast thylakoid membrane. The enzyme catalyses chloride(in) = chloride(out). In terms of biological role, voltage-dependent chloride (Cl) channel probably contributing to proton motive force (PMF) partitioning across the thylakoid membrane by anion influx into the lumen. Influences thylakoid ultrastructure, including lumen size and organization. The chain is Voltage-dependent chloride channel 2, chloroplastic from Arabidopsis thaliana (Mouse-ear cress).